A 1033-amino-acid polypeptide reads, in one-letter code: Tyrosine-protein kinase-like otk (1033 aa).

Residues Met-1–Ala-22 form the signal peptide. The Extracellular segment spans residues Ser-23–Ala-581. Ig-like C2-type domains lie at Ser-25 to Ser-114, Leu-113 to Ser-199, Pro-251 to Asn-365, Pro-368 to Asn-463, and Pro-468 to Val-558. N-linked (GlcNAc...) asparagine glycosylation occurs at Asn-39. 4 disulfide bridges follow: Cys-46-Cys-95, Cys-137-Cys-188, Cys-276-Cys-354, and Cys-399-Cys-447. Asn-336, Asn-417, Asn-429, Asn-444, Asn-457, Asn-512, and Asn-524 each carry an N-linked (GlcNAc...) asparagine glycan. Residues Cys-490 and Cys-542 are joined by a disulfide bond. A helical membrane pass occupies residues Val-582–Trp-602. Over Cys-603–Lys-1033 the chain is Cytoplasmic. 2 disordered regions span residues Leu-617–Ala-679 and Ser-718–Met-760. Over residues Lys-655 to Arg-673 the composition is skewed to polar residues. Residue Ser-678 is modified to Phosphoserine. The region spanning Leu-692–Met-1028 is the Protein kinase; inactive domain. Over residues Ser-720–Ser-731 the composition is skewed to basic and acidic residues.

Belongs to the protein kinase superfamily. Tyr protein kinase family. Insulin receptor subfamily. In terms of assembly, interacts with plexA; component of a receptor complex that mediates the repulsive signaling in response to Semaphorin ligands. As to expression, dynamically expressed during embryogenesis in several areas of the developing nervous system, including neurons and fasciculating axons. Expression in stage 7 embryos is seen in the anterior midgut primordia, cephalic furrow and along the germinal band. At stage 11, expression is in 15 stripes over the trunk region, and in the anterior and posterior midgut primordia. Stage 12 shows expression in the developing nervous system, procephalic lobe and maxillar bud. Stage 13 shows expression in the ventral cord, maxillar segment and in three regions of the gut. At stage 16 expression is preferentially detected throughout the nervous system, including the neuromers in the ventral cord and the supraesophageal ganglion (at protein level). In larva, expression is seen in developing R cells and is localized predominantly to R1-R6 growth cones.

It localises to the cell membrane. Its function is as follows. Acts as a calcium-dependent, homophilic cell adhesion molecule that regulates neural recognition during the development of the nervous system. Component of the repulsive Plexin signaling response to regulate motor axon guidance at the embryonic stage. Also component of a receptor complex that is required in the adult visual system to innervate the lamina layer; specific targeting of R1-R6 axons. This chain is Tyrosine-protein kinase-like otk, found in Drosophila melanogaster (Fruit fly).